Here is a 575-residue protein sequence, read N- to C-terminus: Major outer membrane protein MspA (575 aa).

Residues 1 to 19 form the signal peptide; it reads MKKALVFFVALAMIGSVFA.

The protein resides in the cell outer membrane. In terms of biological role, major component of the outer membrane sheath. This is Major outer membrane protein MspA (mspA) from Treponema maltophilum.